A 479-amino-acid chain; its full sequence is Aspartyl/glutamyl-tRNA(Asn/Gln) amidotransferase subunit B (479 aa).

Belongs to the GatB/GatE family. GatB subfamily. As to quaternary structure, heterotrimer of A, B and C subunits.

It carries out the reaction L-glutamyl-tRNA(Gln) + L-glutamine + ATP + H2O = L-glutaminyl-tRNA(Gln) + L-glutamate + ADP + phosphate + H(+). The enzyme catalyses L-aspartyl-tRNA(Asn) + L-glutamine + ATP + H2O = L-asparaginyl-tRNA(Asn) + L-glutamate + ADP + phosphate + 2 H(+). Its function is as follows. Allows the formation of correctly charged Asn-tRNA(Asn) or Gln-tRNA(Gln) through the transamidation of misacylated Asp-tRNA(Asn) or Glu-tRNA(Gln) in organisms which lack either or both of asparaginyl-tRNA or glutaminyl-tRNA synthetases. The reaction takes place in the presence of glutamine and ATP through an activated phospho-Asp-tRNA(Asn) or phospho-Glu-tRNA(Gln). This Mycoplasma mycoides subsp. mycoides SC (strain CCUG 32753 / NCTC 10114 / PG1) protein is Aspartyl/glutamyl-tRNA(Asn/Gln) amidotransferase subunit B.